A 232-amino-acid chain; its full sequence is Nucleoside diphosphate kinase 2, chloroplastic (232 aa).

The transit peptide at 1–79 directs the protein to the chloroplast; it reads MGCLSVVGAS…TRIFLPHLVA (79 aa). Residues Lys-92, Phe-140, Arg-168, Thr-174, Arg-185, and Asn-195 each coordinate ATP. Catalysis depends on His-198, which acts as the Pros-phosphohistidine intermediate.

The protein belongs to the NDK family. Mg(2+) is required as a cofactor.

Its subcellular location is the plastid. It localises to the chloroplast. It catalyses the reaction a 2'-deoxyribonucleoside 5'-diphosphate + ATP = a 2'-deoxyribonucleoside 5'-triphosphate + ADP. The enzyme catalyses a ribonucleoside 5'-diphosphate + ATP = a ribonucleoside 5'-triphosphate + ADP. In terms of biological role, major role in the synthesis of nucleoside triphosphates other than ATP. The ATP gamma phosphate is transferred to the NDP beta phosphate via a ping-pong mechanism, using a phosphorylated active-site intermediate. The protein is Nucleoside diphosphate kinase 2, chloroplastic of Nicotiana tabacum (Common tobacco).